Reading from the N-terminus, the 950-residue chain is Leucine--tRNA ligase (950 aa).

The short motif at 41 to 52 is the 'HIGH' region element; it reads PYPSGDGLHVGH. The 'KMSKS' region motif lies at 718-722; it reads KMSKS. Lys-721 is an ATP binding site.

Belongs to the class-I aminoacyl-tRNA synthetase family.

The protein localises to the cytoplasm. It catalyses the reaction tRNA(Leu) + L-leucine + ATP = L-leucyl-tRNA(Leu) + AMP + diphosphate. The chain is Leucine--tRNA ligase from Rhodopirellula baltica (strain DSM 10527 / NCIMB 13988 / SH1).